Consider the following 578-residue polypeptide: Polypeptide N-acetylgalactosaminyltransferase 4 (578 aa).

Residues 1 to 12 (MAVRWTWAGKSC) lie on the Cytoplasmic side of the membrane. The helical; Signal-anchor for type II membrane protein transmembrane segment at 13 to 35 (LLLALLTLAYILVEFSVSTLYAS) threads the bilayer. Residues 36 to 578 (PGAGGARELG…DKNQLWRFEK (543 aa)) are Lumenal-facing. 5 disulfide bridges follow: C124/C357, C348/C421, C457/C477, C503/C518, and C547/C565. Residues 134–243 (LPTTSVIIAF…TGWLEPLLER (110 aa)) are catalytic subdomain A. Residues D175 and R204 each coordinate substrate. Residues D227 and H229 each contribute to the Mn(2+) site. Residues 303-365 (PIRSPTMAGG…PCSHVGHVFP (63 aa)) are catalytic subdomain B. W334 contributes to the substrate binding site. Residue H362 participates in Mn(2+) binding. A substrate-binding site is contributed by Y370. Positions 444-577 (WHGAIRSMGI…LDKNQLWRFE (134 aa)) constitute a Ricin B-type lectin domain. The N-linked (GlcNAc...) asparagine glycan is linked to N471.

It belongs to the glycosyltransferase 2 family. GalNAc-T subfamily. Mn(2+) serves as cofactor. As to expression, highly expressed in sublingual gland, stomach, colon, small intestine and cervix. Expressed at intermediate levels in kidney, ovary, lung and uterus. Weakly expressed in spleen, liver, heart and brain. Not expressed in submandibular and parotid glands, skeletal muscle and testis.

It localises to the golgi apparatus membrane. It carries out the reaction L-seryl-[protein] + UDP-N-acetyl-alpha-D-galactosamine = a 3-O-[N-acetyl-alpha-D-galactosaminyl]-L-seryl-[protein] + UDP + H(+). The enzyme catalyses L-threonyl-[protein] + UDP-N-acetyl-alpha-D-galactosamine = a 3-O-[N-acetyl-alpha-D-galactosaminyl]-L-threonyl-[protein] + UDP + H(+). The protein operates within protein modification; protein glycosylation. Catalyzes the initial reaction in O-linked oligosaccharide biosynthesis, the transfer of an N-acetyl-D-galactosamine residue to a serine or threonine residue on the protein receptor. Has a highest activity toward EA2 peptide substrate and a much lower activity with EPO-T, Muc2, Muc1a, Muc1b. The sequence is that of Polypeptide N-acetylgalactosaminyltransferase 4 (Galnt4) from Mus musculus (Mouse).